The following is a 498-amino-acid chain: Glycerol kinase (498 aa).

An ADP-binding site is contributed by Thr-12. Thr-12, Thr-13, and Ser-14 together coordinate ATP. Thr-12 contacts sn-glycerol 3-phosphate. Arg-16 contributes to the ADP binding site. Sn-glycerol 3-phosphate contacts are provided by Arg-82, Glu-83, and Tyr-134. The glycerol site is built by Arg-82, Glu-83, and Tyr-134. His-230 bears the Phosphohistidine; by HPr mark. Position 244 (Asp-244) interacts with sn-glycerol 3-phosphate. Glycerol is bound by residues Asp-244 and Gln-245. The ADP site is built by Thr-266 and Gly-309. Residues Thr-266, Gly-309, Gln-313, and Gly-410 each contribute to the ATP site. ADP-binding residues include Gly-410 and Asn-414.

This sequence belongs to the FGGY kinase family. Homotetramer and homodimer (in equilibrium). In terms of processing, the phosphoenolpyruvate-dependent sugar phosphotransferase system (PTS), including enzyme I, and histidine-containing protein (HPr) are required for the phosphorylation, which leads to the activation of the enzyme.

It carries out the reaction glycerol + ATP = sn-glycerol 3-phosphate + ADP + H(+). Its pathway is polyol metabolism; glycerol degradation via glycerol kinase pathway; sn-glycerol 3-phosphate from glycerol: step 1/1. Activated by phosphorylation and inhibited by fructose 1,6-bisphosphate (FBP). In terms of biological role, key enzyme in the regulation of glycerol uptake and metabolism. Catalyzes the phosphorylation of glycerol to yield sn-glycerol 3-phosphate. The protein is Glycerol kinase of Staphylococcus aureus (strain MW2).